Reading from the N-terminus, the 93-residue chain is UPF0457 protein GTNG_2792 (93 aa).

The protein belongs to the UPF0457 family.

This Geobacillus thermodenitrificans (strain NG80-2) protein is UPF0457 protein GTNG_2792.